A 487-amino-acid chain; its full sequence is Betaine aldehyde dehydrogenase 1 (487 aa).

Serine 26, isoleucine 27, and aspartate 93 together coordinate K(+). 150–152 (GAW) lines the NAD(+) pocket. Residue lysine 162 is the Charge relay system of the active site. Residues 176-179 (KPSE) and 229-232 (SVPT) contribute to the NAD(+) site. Leucine 244 provides a ligand contact to K(+). Catalysis depends on glutamate 250, which acts as the Proton acceptor. Residues glycine 252, cysteine 284, and glutamate 384 each contribute to the NAD(+) site. Cysteine 284 serves as the catalytic Nucleophile. Cysteine 284 is subject to Cysteine sulfenic acid (-SOH). K(+) contacts are provided by lysine 454 and glycine 457. Glutamate 461 (charge relay system) is an active-site residue.

This sequence belongs to the aldehyde dehydrogenase family. Dimer of dimers. It depends on K(+) as a cofactor.

It carries out the reaction betaine aldehyde + NAD(+) + H2O = glycine betaine + NADH + 2 H(+). It functions in the pathway amine and polyamine biosynthesis; betaine biosynthesis via choline pathway; betaine from betaine aldehyde: step 1/1. Functionally, involved in the biosynthesis of the osmoprotectant glycine betaine. Catalyzes the irreversible oxidation of betaine aldehyde to the corresponding acid. The sequence is that of Betaine aldehyde dehydrogenase 1 from Rhizobium meliloti (strain 1021) (Ensifer meliloti).